We begin with the raw amino-acid sequence, 122 residues long: Fluoride-specific ion channel FluC (122 aa).

4 helical membrane passes run 1 to 21 (MYAF…RHYL), 35 to 55 (WAIL…SAYL), 67 to 87 (FLLT…LNLI), and 98 to 118 (FLNL…GFWL). Residues Gly74 and Thr77 each coordinate Na(+).

It belongs to the fluoride channel Fluc/FEX (TC 1.A.43) family.

Its subcellular location is the cell inner membrane. The enzyme catalyses fluoride(in) = fluoride(out). Its activity is regulated as follows. Na(+) is not transported, but it plays an essential structural role and its presence is essential for fluoride channel function. In terms of biological role, fluoride-specific ion channel. Important for reducing fluoride concentration in the cell, thus reducing its toxicity. This Dichelobacter nodosus (strain VCS1703A) protein is Fluoride-specific ion channel FluC.